We begin with the raw amino-acid sequence, 137 residues long: MGFRRLSFPTDFIFLFPNHICLPALSKPYQRREISSWLARWFPKDPAKPVVAQKTPIRLELVAGKTYRWCVCGRSKNQPFCDGSHFFQRTGLSPLKFKAQETRTVALCTCKATQRPPYCDGTHKSEQVQKAEVGSPL.

Lys-65 is modified (N6-acetyllysine; alternate). Lys-65 carries the N6-succinyllysine; alternate modification. [2Fe-2S] cluster contacts are provided by Cys-70, Cys-72, Cys-81, and His-85. Lys-96 is modified (N6-acetyllysine). [2Fe-2S] cluster-binding residues include Cys-108, Cys-110, Cys-119, and His-123. Lys-124 is subject to N6-acetyllysine; alternate. The residue at position 124 (Lys-124) is an N6-succinyllysine; alternate.

It belongs to the CISD protein family. Monomer. It depends on [2Fe-2S] cluster as a cofactor.

The protein localises to the mitochondrion. In terms of biological role, can transfer its iron-sulfur clusters to the apoferrodoxins FDX1 and FDX2. Contributes to mitochondrial iron homeostasis and in maintaining normal levels of free iron and reactive oxygen species, and thereby contributes to normal mitochondrial function. This is CDGSH iron-sulfur domain-containing protein 3, mitochondrial (Cisd3) from Mus musculus (Mouse).